An 83-amino-acid polypeptide reads, in one-letter code: Putative snRNP Sm-like protein (83 aa).

A Sm domain is found at 9–81 (KPMDVLKSAL…VIFVSPSKGD (73 aa)).

It belongs to the snRNP Sm proteins family.

This is Putative snRNP Sm-like protein from Thermoplasma acidophilum (strain ATCC 25905 / DSM 1728 / JCM 9062 / NBRC 15155 / AMRC-C165).